The sequence spans 680 residues: Tumor protein 63 (680 aa).

The tract at residues 1–107 is transcription activation; sequence MNFETSRCAT…MQDSDLSDPM (107 aa). Residues 123 to 157 show a composition bias toward polar residues; that stretch reads QIQNGSSSTSPYNTDHAQNSVTAPSPYAQPSSTFD. Residues 123–171 are disordered; it reads QIQNGSSSTSPYNTDHAQNSVTAPSPYAQPSSTFDALSPSPAIPSNTDY. A DNA-binding region spans residues 170–362; it reads DYPGPHSFDV…KADEDSIRKQ (193 aa). Positions 244, 247, 308, and 312 each coordinate Zn(2+). Residues 351–360 are compositionally biased toward basic and acidic residues; sequence DRKADEDSIR. 2 disordered regions span residues 351-393 and 436-472; these read DRKA…IKKR and RQQQ…MNSM. Positions 352 to 388 are interaction with HIPK2; it reads RKADEDSIRKQQVSDSAKNGDGTKRPFRQNTHGIQMT. The segment covering 379 to 389 has biased composition (polar residues); that stretch reads RQNTHGIQMTS. The oligomerization stretch occupies residues 394 to 443; that stretch reads RSPDDELLYLPVRGRETYEMLLKIKESLELMQYLPQHTIETYRQQQQQQH. The span at 437 to 463 shows a compositional bias: low complexity; that stretch reads QQQQQQHQHLLQKQTSMQSQSSYGNSS. The SAM domain occupies 541 to 607; sequence PPYPTDCSIV…WKGILDHRQL (67 aa). The transactivation inhibition stretch occupies residues 610–680; the sequence is FSSPPHLLRT…KQQRIKEEGE (71 aa). Residue Lys676 forms a Glycyl lysine isopeptide (Lys-Gly) (interchain with G-Cter in SUMO) linkage.

It belongs to the p53 family. Binds DNA as a homotetramer. Isoform composition of the tetramer may determine transactivation activity. Interacts with HIPK2. Interacts with SSRP1, leading to stimulate coactivator activity. Interacts with PDS5A. Interacts (via activation domain) with NOC2L. Interacts with WWP1. Requires Zn(2+) as cofactor. In terms of processing, may be sumoylated. Post-translationally, ubiquitinated. Polyubiquitination involves WWP1 and leads to proteasomal degradation of this protein. As to expression, widely expressed, notably in thymus, prostate, placenta and skeletal muscle, although the precise isoform varies according to tissue type. Progenitor cell layers of skin, breast and prostate express high levels of DeltaN-type isoforms.

The protein localises to the nucleus. In terms of biological role, acts as a sequence specific DNA binding transcriptional activator or repressor. The isoforms contain a varying set of transactivation and auto-regulating transactivation inhibiting domains thus showing an isoform specific activity. May be required in conjunction with TP73/p73 for initiation of p53/TP53 dependent apoptosis in response to genotoxic insults and the presence of activated oncogenes. Involved in Notch signaling by probably inducing JAG1 and JAG2. Activates transcription of the p21 promoter. Activates RIPK4 transcription. Plays a role in the regulation of epithelial morphogenesis. The ratio of DeltaN-type and TA*-type isoforms may govern the maintenance of epithelial stem cell compartments and regulate the initiation of epithelial stratification from the undifferentiated embryonal ectoderm. Required for limb formation from the apical ectodermal ridge. The protein is Tumor protein 63 (Tp63) of Mus musculus (Mouse).